The chain runs to 920 residues: Zinc finger MIZ domain-containing protein 2 (920 aa).

Disordered regions lie at residues 1–22 (MNSMNPMKPALPPAPHGDGSFA) and 54–79 (SQVLGNPMGPAGSPSGSSMMPGVAGG). Over residues 60–79 (PMGPAGSPSGSSMMPGVAGG) the composition is skewed to low complexity. At arginine 111 the chain carries Omega-N-methylarginine. 2 disordered regions span residues 243-265 (GQRLPQHGYPGPPQAQPLPRQGV) and 286-391 (PSTA…SPNQ). Arginine 245 and arginine 262 each carry asymmetric dimethylarginine. Residues 295-304 (PGQPPAPSPS) show a composition bias toward pro residues. Over residues 334 to 354 (EQFNGQGASFNGGSVSYSQPG) the composition is skewed to polar residues. The span at 366–379 (PSSPLPGNPTPPMT) shows a compositional bias: pro residues. Residues 380–389 (PSSSVPYMSP) are compositionally biased toward low complexity. Residues lysine 402 and lysine 457 each participate in a glycyl lysine isopeptide (Lys-Gly) (interchain with G-Cter in SUMO2) cross-link. The tract at residues 435–506 (PFRLQHNLAV…TIERGDNKTS (72 aa)) is interaction with AR. The SP-RING-type zinc finger occupies 585–671 (GEDGVEQTAI…IYIQNSDYEE (87 aa)). Zn(2+)-binding residues include cysteine 616, histidine 618, cysteine 639, and cysteine 642. Lysine 692 participates in a covalent cross-link: Glycyl lysine isopeptide (Lys-Gly) (interchain with G-Cter in SUMO2). The tract at residues 803–920 (SQMAPAGHLD…DDLLSLFENN (118 aa)) is disordered. The segment covering 876–890 (AGEAPEPALDLLPEL) has biased composition (low complexity). Polar residues predominate over residues 906–920 (PTNNNDDLLSLFENN).

Interacts with AR, SMARCA4/BRG1 and SMARCE1/BAF57. Interaction with either SMARCA4 and SMARCE1 enhances AR-mediated transcription. As to expression, expressed most abundantly in testis with lower levels in heart, brain, pancreas, prostate and ovary.

The protein localises to the nucleus. Increases ligand-dependent transcriptional activity of AR and other nuclear hormone receptors. The protein is Zinc finger MIZ domain-containing protein 2 (ZMIZ2) of Homo sapiens (Human).